The chain runs to 422 residues: DNA-binding transcriptional activator AdeR (422 aa).

This sequence belongs to the CdaR family.

Functionally, activates ald expression in response to alanine availability and is important for normal sporulation in B.subtilis. The sequence is that of DNA-binding transcriptional activator AdeR from Bacillus subtilis (strain 168).